We begin with the raw amino-acid sequence, 238 residues long: Ribosomal RNA small subunit methyltransferase G (238 aa).

S-adenosyl-L-methionine-binding positions include Gly-77, Phe-82, Ala-128 to Glu-129, and Arg-147.

This sequence belongs to the methyltransferase superfamily. RNA methyltransferase RsmG family.

Its subcellular location is the cytoplasm. Its function is as follows. Specifically methylates the N7 position of guanine in position 535 of 16S rRNA. This is Ribosomal RNA small subunit methyltransferase G from Exiguobacterium sp. (strain ATCC BAA-1283 / AT1b).